Here is a 475-residue protein sequence, read N- to C-terminus: MNTALAQQIANEGGVEAWMIAQQHKSLLRFLTCGSVDDGKSTLIGRLLHDTRQIYEDQLSSLHNDSKRHGTQGEKLDLALLVDGLQAEREQGITIDVAYRYFSTEKRKFIIADTPGHEQYTRNMATGASTCELAILLIDARKGVLDQTRRHSFISTLLGIKHLVVAINKMDLVDYSEKTFTRIREDYLTFAGQLPGNLDIRFVPLSALEGDNVASQSESMAWYSGPTLLEVLETVEIQRVVDAQPMRFPVQYVNRPNLDFRGYAGTLASGRVEVGQRVKVLPSGVESNVARIVTFDGDREEAFAGEAITLVLTDEIDISRGDLLLAADEALPAVQSASVDVVWMAEQPLSPGQSYDIKIAGKKTRARVDGIRYQVDINNLTQREVENLPLNGIGLVDLTFDEPLVLDRYQQNPVTGGLIFIDRLSNVTVGAGMVHEPVSQATAAPSEFSAFELELNALVRRHFPHWGARDLLGDK.

Residues 25–239 (KSLLRFLTCG…EVLETVEIQR (215 aa)) form the tr-type G domain. The segment at 34 to 41 (GSVDDGKS) is G1. 34-41 (GSVDDGKS) is a binding site for GTP. Residues 92 to 96 (GITID) are G2. The tract at residues 113 to 116 (DTPG) is G3. Residues 113–117 (DTPGH) and 168–171 (NKMD) contribute to the GTP site. The tract at residues 168-171 (NKMD) is G4. Residues 206–208 (SAL) form a G5 region.

The protein belongs to the TRAFAC class translation factor GTPase superfamily. Classic translation factor GTPase family. CysN/NodQ subfamily. Heterodimer composed of CysD, the smaller subunit, and CysN.

The enzyme catalyses sulfate + ATP + H(+) = adenosine 5'-phosphosulfate + diphosphate. It participates in sulfur metabolism; hydrogen sulfide biosynthesis; sulfite from sulfate: step 1/3. In terms of biological role, with CysD forms the ATP sulfurylase (ATPS) that catalyzes the adenylation of sulfate producing adenosine 5'-phosphosulfate (APS) and diphosphate, the first enzymatic step in sulfur assimilation pathway. APS synthesis involves the formation of a high-energy phosphoric-sulfuric acid anhydride bond driven by GTP hydrolysis by CysN coupled to ATP hydrolysis by CysD. This chain is Sulfate adenylyltransferase subunit 1, found in Escherichia coli (strain ATCC 8739 / DSM 1576 / NBRC 3972 / NCIMB 8545 / WDCM 00012 / Crooks).